A 309-amino-acid polypeptide reads, in one-letter code: Transcription elongation factor S-II (309 aa).

The TFIIS N-terminal domain occupies 5-79; the sequence is EVLVHVKNLE…SSWKDAINKN (75 aa). Residues 78 to 142 form a disordered region; that stretch reads KNKRSRQAQQ…NSKNDGVDTA (65 aa). Over residues 88 to 102 the composition is skewed to basic and acidic residues; that stretch reads HHQDHAPGNAEDKTT. Positions 103 to 120 are enriched in polar residues; it reads VGESVNGVQQPASSQSDA. A Phosphoserine modification is found at Ser-116. The TFIIS central domain maps to 148-264; the sequence is LRDQVLKALY…NAQGATIERS (117 aa). Residues 267-307 form a TFIIS-type zinc finger; sequence DRFTCGKCKEKKVSYYQLQTRSADEPLTTFCTCEACGNRWK. Zn(2+) contacts are provided by Cys-271, Cys-274, Cys-299, and Cys-302.

Belongs to the TFS-II family.

Its subcellular location is the nucleus. In terms of biological role, necessary for efficient RNA polymerase II transcription elongation past template-encoded arresting sites. The arresting sites in DNA have the property of trapping a certain fraction of elongating RNA polymerases that pass through, resulting in locked ternary complexes. Cleavage of the nascent transcript by S-II allows the resumption of elongation from the new 3'-terminus. Its function is as follows. Can promote the transfer of one strand of a double-stranded DNA molecule to a homologous single strand and thus may be involved in recombination. This is Transcription elongation factor S-II (DST1) from Saccharomyces cerevisiae (strain ATCC 204508 / S288c) (Baker's yeast).